Consider the following 640-residue polypeptide: 1,4-alpha-glucan branching enzyme GlgB (640 aa).

Asp-318 functions as the Nucleophile in the catalytic mechanism. The active-site Proton donor is the Glu-371.

It belongs to the glycosyl hydrolase 13 family. GlgB subfamily. As to quaternary structure, monomer.

It carries out the reaction Transfers a segment of a (1-&gt;4)-alpha-D-glucan chain to a primary hydroxy group in a similar glucan chain.. It participates in glycan biosynthesis; glycogen biosynthesis. Functionally, catalyzes the formation of the alpha-1,6-glucosidic linkages in glycogen by scission of a 1,4-alpha-linked oligosaccharide from growing alpha-1,4-glucan chains and the subsequent attachment of the oligosaccharide to the alpha-1,6 position. The protein is 1,4-alpha-glucan branching enzyme GlgB of Francisella tularensis subsp. mediasiatica (strain FSC147).